Consider the following 760-residue polypeptide: Catecholate siderophore receptor Fiu (760 aa).

The first 31 residues, 1–31, serve as a signal peptide directing secretion; sequence MENNRNFPARQFHSLTFFAGLCIGITPVAQA. The TBDR plug domain occupies 67–175; sequence PVADTTRTMT…PTGSINMISK (109 aa). In terms of domain architecture, TBDR beta-barrel spans 180 to 760; it reads DSGIDASASI…TFLLTANMHF (581 aa). The short motif at 743–760 is the TonB C-terminal box element; the sequence is RYHPGEPRTFLLTANMHF.

The protein belongs to the TonB-dependent receptor family.

It is found in the cell outer membrane. In terms of biological role, involved in the active transport across the outer membrane of iron complexed with catecholate siderophores such as dihydroxybenzoylserine and dihydroxybenzoate. It derives its energy for transport by interacting with the trans-periplasmic membrane protein TonB. Can also transport catechol-substituted cephalosporins. Receptor for microcins M, H47 and E492. This is Catecholate siderophore receptor Fiu (fiu) from Escherichia coli (strain UTI89 / UPEC).